A 115-amino-acid polypeptide reads, in one-letter code: Tyrosine-protein phosphatase 23 (115 aa).

Residues 1–115 enclose the Tyrosine-protein phosphatase domain; that stretch reads WMMIVEQKCR…EIGGDAPMVV (115 aa). Asp-83 contributes to the substrate binding site.

The protein belongs to the protein-tyrosine phosphatase family.

It catalyses the reaction O-phospho-L-tyrosyl-[protein] + H2O = L-tyrosyl-[protein] + phosphate. The sequence is that of Tyrosine-protein phosphatase 23 (STY-23) from Styela plicata (Wrinkled sea squirt).